The sequence spans 250 residues: NAD(P)H-hydrate epimerase (250 aa).

The YjeF N-terminal domain maps to 14–238; the sequence is AAALDVELMS…SIAEKYGIQK (225 aa). Residue 74 to 78 coordinates (6S)-NADPHX; the sequence is NNGGD. Asparagine 75 and aspartate 143 together coordinate K(+). (6S)-NADPHX contacts are provided by residues 147-154, tyrosine 159, and aspartate 180; that span reads GFSFHGTA. Position 183 (serine 183) interacts with K(+).

This sequence belongs to the NnrE/AIBP family. It depends on K(+) as a cofactor.

It carries out the reaction (6R)-NADHX = (6S)-NADHX. It catalyses the reaction (6R)-NADPHX = (6S)-NADPHX. Catalyzes the epimerization of the S- and R-forms of NAD(P)HX, a damaged form of NAD(P)H that is a result of enzymatic or heat-dependent hydration. This is a prerequisite for the S-specific NAD(P)H-hydrate dehydratase to allow the repair of both epimers of NAD(P)HX. In Thalassiosira pseudonana (Marine diatom), this protein is NAD(P)H-hydrate epimerase.